The sequence spans 298 residues: MLAPLFAALLAGAATASPIQERQSSVPVGTIITACTVPNTFALTFDDGPFAYTSELLDLLSSNGVKATFFLNGQNWGSIYDYTSVVTRMDAEGHQIGSHTWSHADLATLDAAGITSQMTQLETALTSILGKVPTYMRPPYFSTNALALSTLGGLGYHVINANIDTLDYEHDDDTIGVAFTNFQNGLASGGTVSLMHDVHAQTVHVLVQEAINAIKAKGLTPVTVGTCLGDASANWYKSGGGSGTTPPPATGGPSPDDTCGGSNGYVCQNSQCCSQWGWCGTTSEYCAAGCQAAYGPCT.

An N-terminal signal peptide occupies residues 1–16 (MLAPLFAALLAGAATA). The 184-residue stretch at 39–222 (NTFALTFDDG…AIKAKGLTPV (184 aa)) folds into the NodB homology domain. Catalysis depends on Asp-46, which acts as the Proton acceptor. Asp-46 is an acetate binding site. Co(2+) contacts are provided by Asp-47, His-99, and His-103. An acetate-binding site is contributed by Tyr-140. His-196 functions as the Proton donor in the catalytic mechanism. Positions 256–298 (DDTCGGSNGYVCQNSQCCSQWGWCGTTSEYCAAGCQAAYGPCT) constitute a Chitin-binding type-1 domain. Disulfide bonds link Cys-259–Cys-273, Cys-267–Cys-279, Cys-272–Cys-286, and Cys-290–Cys-297.

This sequence belongs to the polysaccharide deacetylase family. It depends on Co(2+) as a cofactor.

The protein resides in the secreted. The enzyme catalyses [(1-&gt;4)-N-acetyl-beta-D-glucosaminyl](n) + n H2O = chitosan + n acetate. With respect to regulation, inhibited by Fe(2+) and to a lesser extent by Mn(2+). Its function is as follows. Hydrolyzes the N-acetamido groups of N-acetyl-D-glucosamine polymers in chitin to form chitosan and acetate. May play a role in evasion of the host immune response; plant chitinases liberate chitin molecules from the fungal cell wall which act as elicitors of the plant immune response, deacetylation of the liberated chitin neutralizes elicitor activity. In Pestalotiopsis sp, this protein is Chitin deacetylase.